The primary structure comprises 152 residues: uncharacterized protein (152 aa).

It belongs to the antirestriction protein family.

This is an uncharacterized protein from Escherichia coli (strain K12).